Consider the following 38-residue polypeptide: Large ribosomal subunit protein bL36 (38 aa).

It belongs to the bacterial ribosomal protein bL36 family.

This is Large ribosomal subunit protein bL36 from Synechococcus sp. (strain JA-2-3B'a(2-13)) (Cyanobacteria bacterium Yellowstone B-Prime).